The primary structure comprises 795 residues: MASGAARYRLSCSLPGHELDVRGLVCCLYPPGAFVSVSRDRTTRLWAPDSPNRGFTEMHCMSGHSNFVSCVCIIPSSDIYPHGLIATGGNDHNICIFSLDSPMPLYILKGHKDTVCSLSSGKFGTLLSGSWDTTAKVWLNDKCMMTLQGHTAAVWAVKILPEQGLMLTGSADKTIKLWKAGRCERTFSGHEDCVRGLAILSETEFLSCANDASIRRWQITGECLGVYYGHTNYIYSISVFPNCRDFVTTAEDRSLRIWKHGECAQTIRLPAQSIWCCCVLDNGDIVVGASDGIIRVFTEADERTASAEEIKAFERELSQATIDSKTGDLGDINAEQLPGREHLNEPGTREGQTRLIRDGERVEAYQWSVSDGRWIKIGDVVGSSGANQQTSGKVLYEGKEFDYVFSIDVNEGGPSYKLPYNVSDDPWLVAYNFLQKNDLNPMFLDQVAKFIIDNTKGQTLGLGNTSFSDPFTGGGRYVPGTSGPSNTVQTADPFTGAGRYMPGSAGMDTTMAGVDPFTGNSAYRSAASKTVNIYFPKKEALTFDQANPTQILGKLKELNGSAPEEKKLTEDDLVLLEKILSLICGNASEKPTAQQLQVLWKAINWPEDIVFPALDILRLSIKHPSVNENFCNEKEGDQFSSHLINLLNPKGKPANQLLALRTFCNCFVSQAGQKLMMSQRESLMSHAIELKSGSNKNIHIALATLTLNYSVCFHKDHNIEGKAQCLSVISTILEVVQDLEATFRLLVALGTLISDDSNAIQLAKSLGVDSQIKKYASVSEPAKVSECCRLILNLL.

7 WD repeats span residues 17 to 56 (HELDVRGLVCCLYPPGAFVSVSRDRTTRLWAPDSPNRGFT), 63 to 107 (GHSN…PLYI), 110 to 148 (GHKDTVCSLSSGKFGTLLSGSWDTTAKVWLNDKCMMTLQ), 149 to 188 (GHTAAVWAVKILPEQGLMLTGSADKTIKLWKAGRCERTFS), 190 to 227 (HEDCVRGLAILSETEFLSCANDASIRRWQITGECLGVY), 229 to 268 (GHTNYIYSISVFPNCRDFVTTAEDRSLRIWKHGECAQTIR), and 270 to 307 (PAQSIWCCCVLDNGDIVVGASDGIIRVFTEADERTASA). At Ser-50 the chain carries Phosphoserine. In terms of domain architecture, PFU spans 366–465 (QWSVSDGRWI…KGQTLGLGNT (100 aa)). Lys-529 is subject to N6-acetyllysine. Positions 533 to 794 (IYFPKKEALT…SECCRLILNL (262 aa)) constitute a PUL domain. 6 ARM repeats span residues 546–588 (ANPT…GNAS), 589–620 (EKPTAQQLQVLWKAINWPEDIVFPALDILRLS), 621–669 (IKHP…CFVS), 670–715 (QAGQ…CFHK), 716–755 (DHNIEGKAQCLSVISTILEVVQDLEATFRLLVALGTLISD), and 756–795 (DSNAIQLAKSLGVDSQIKKYASVSEPAKVSECCRLILNLL).

This sequence belongs to the WD repeat PLAP family. As to quaternary structure, interacts with ubiquitin. Interacts with UBXN6, VCP and YOD1; may form a complex involved in macroautophagy.

The protein localises to the nucleus. It localises to the cytoplasm. Its subcellular location is the synapse. Functionally, plays a role in protein ubiquitination, sorting and degradation through its association with VCP. Involved in ubiquitin-mediated membrane proteins trafficking to late endosomes in an ESCRT-dependent manner, and hence plays a role in synaptic vesicle recycling. May play a role in macroautophagy, regulating for instance the clearance of damaged lysosomes. Plays a role in cerebellar Purkinje cell development. Positively regulates cytosolic and calcium-independent phospholipase A2 activities in a tumor necrosis factor alpha (TNF-alpha)- or lipopolysaccharide (LPS)-dependent manner, and hence prostaglandin E2 biosynthesis. This is Phospholipase A-2-activating protein (Plaa) from Rattus norvegicus (Rat).